The sequence spans 115 residues: Nitrogenase-stabilizing/protective protein NifW (115 aa).

It belongs to the NifW family. Homotrimer; associates with NifD.

Functionally, may protect the nitrogenase Fe-Mo protein from oxidative damage. The sequence is that of Nitrogenase-stabilizing/protective protein NifW from Stutzerimonas stutzeri (strain A1501) (Pseudomonas stutzeri).